We begin with the raw amino-acid sequence, 262 residues long: MQVDLLSSAQSAHALHLFHQHSPLVHCMTNDVVQTFTANTLLALGASPAMVIETEEASQFAAIASALLINVGTLTQPRAQAMRAAVEQAKRSQTPWTLDPVAVGALDYRRCFCLELLSHKPTAIRGNASEIMALAGIANGGRGVDTTDAAANAIPAAQTLARETGAIVVVTGEVDYVTDGHRIIGIHGGDPLMTKVVGTGCALSAVVAACCALPGDMLENVASACHWMKQAGERAVARSEGPGSFVPHFLDALWQLTPEVQA.

Substrate is bound at residue Met50. ATP-binding residues include Arg125 and Thr171. Gly198 contacts substrate.

It belongs to the Thz kinase family. Mg(2+) serves as cofactor.

The enzyme catalyses 5-(2-hydroxyethyl)-4-methylthiazole + ATP = 4-methyl-5-(2-phosphooxyethyl)-thiazole + ADP + H(+). Its pathway is cofactor biosynthesis; thiamine diphosphate biosynthesis; 4-methyl-5-(2-phosphoethyl)-thiazole from 5-(2-hydroxyethyl)-4-methylthiazole: step 1/1. Functionally, catalyzes the phosphorylation of the hydroxyl group of 4-methyl-5-beta-hydroxyethylthiazole (THZ). In Escherichia coli O17:K52:H18 (strain UMN026 / ExPEC), this protein is Hydroxyethylthiazole kinase.